A 295-amino-acid chain; its full sequence is Protease HtpX (295 aa).

2 helical membrane-spanning segments follow: residues 4 to 24 and 42 to 62; these read ILLF…TLSL and QLLI…LFIS. A Zn(2+)-binding site is contributed by His147. Residue Glu148 is part of the active site. His151 provides a ligand contact to Zn(2+). Transmembrane regions (helical) follow at residues 158-178 and 199-219; these read VTLA…ARII and VATI…VMWF. Glu224 lines the Zn(2+) pocket.

The protein belongs to the peptidase M48B family. Requires Zn(2+) as cofactor.

The protein localises to the cell inner membrane. This is Protease HtpX from Pseudomonas fluorescens (strain ATCC BAA-477 / NRRL B-23932 / Pf-5).